We begin with the raw amino-acid sequence, 1889 residues long: Vacuolar membrane-associated protein IML1 (1889 aa).

Disordered regions lie at residues 1–74 (MPPP…SRLR), 515–540 (QPGQ…TLTF), 551–570 (SPNK…PLSS), 716–808 (ARLP…LKAP), 838–900 (AGAS…DSPT), and 1252–1272 (PPNE…DTNP). Polar residues predominate over residues 47-60 (YSNSPGDTVSSNST). Over residues 729–742 (RCRDHEETPRRQAL) the composition is skewed to basic and acidic residues. 3 stretches are compositionally biased toward polar residues: residues 747–766 (PLGT…QTLP), 787–804 (KSMS…SSSP), and 840–853 (ASKT…SQDL). The segment covering 865–877 (SSSRRLTGGTSTS) has biased composition (low complexity). Residues 1331-1417 (ENGGVRMQNR…DGQYFYQISN (87 aa)) form the DEP domain. 2 disordered regions span residues 1424–1484 (PPGW…GNKP) and 1724–1824 (PTPL…WSTW). Low complexity-rich tracts occupy residues 1737–1789 (SPAL…PGLT) and 1801–1811 (PSTSATTTTAC).

The protein belongs to the IML1 family.

The protein localises to the vacuole membrane. The polypeptide is Vacuolar membrane-associated protein IML1 (IML1) (Chaetomium globosum (strain ATCC 6205 / CBS 148.51 / DSM 1962 / NBRC 6347 / NRRL 1970) (Soil fungus)).